The primary structure comprises 629 residues: Phosphomethylpyrimidine synthase (629 aa).

The disordered stretch occupies residues 1–20; that stretch reads MSTTLKNAAHLSESAQVDSG. Residues asparagine 233, methionine 262, tyrosine 291, histidine 327, 347-349, 388-391, and glutamate 427 contribute to the substrate site; these read SRG and DGLR. Histidine 431 contacts Zn(2+). Residue tyrosine 454 participates in substrate binding. Histidine 495 contributes to the Zn(2+) binding site. [4Fe-4S] cluster-binding residues include cysteine 575, cysteine 578, and cysteine 583.

This sequence belongs to the ThiC family. In terms of assembly, homodimer. It depends on [4Fe-4S] cluster as a cofactor.

It carries out the reaction 5-amino-1-(5-phospho-beta-D-ribosyl)imidazole + S-adenosyl-L-methionine = 4-amino-2-methyl-5-(phosphooxymethyl)pyrimidine + CO + 5'-deoxyadenosine + formate + L-methionine + 3 H(+). The protein operates within cofactor biosynthesis; thiamine diphosphate biosynthesis. Its function is as follows. Catalyzes the synthesis of the hydroxymethylpyrimidine phosphate (HMP-P) moiety of thiamine from aminoimidazole ribotide (AIR) in a radical S-adenosyl-L-methionine (SAM)-dependent reaction. The protein is Phosphomethylpyrimidine synthase of Pseudomonas savastanoi pv. phaseolicola (strain 1448A / Race 6) (Pseudomonas syringae pv. phaseolicola (strain 1448A / Race 6)).